We begin with the raw amino-acid sequence, 86 residues long: Palustrin-3b (86 aa).

The N-terminal stretch at 1-22 (MFTLKKPLLLIVLLGIISLSLC) is a signal peptide. The propeptide occupies 23–36 (EQERNADEDEESEI). Cysteine 81 and cysteine 86 are oxidised to a cystine.

As to expression, expressed by the skin glands.

Its subcellular location is the secreted. Its function is as follows. Antimicrobial peptide. The protein is Palustrin-3b of Odorrana versabilis (Chinese bamboo leaf odorous frog).